The following is a 436-amino-acid chain: Ribosomal protein uS12 methylthiotransferase RimO (436 aa).

An MTTase N-terminal domain is found at 2–117 (RNVGIISLGC…IVDVIEEVKK (116 aa)). [4Fe-4S] cluster-binding residues include C11, C47, C80, C154, C158, and C161. The 230-residue stretch at 140–369 (TTPPYYAYLK…MEIQKQISYE (230 aa)) folds into the Radical SAM core domain. Residues 372–436 (MSKIGTKLEV…AFEYDLVGEY (65 aa)) enclose the TRAM domain.

This sequence belongs to the methylthiotransferase family. RimO subfamily. The cofactor is [4Fe-4S] cluster.

It is found in the cytoplasm. It carries out the reaction L-aspartate(89)-[ribosomal protein uS12]-hydrogen + (sulfur carrier)-SH + AH2 + 2 S-adenosyl-L-methionine = 3-methylsulfanyl-L-aspartate(89)-[ribosomal protein uS12]-hydrogen + (sulfur carrier)-H + 5'-deoxyadenosine + L-methionine + A + S-adenosyl-L-homocysteine + 2 H(+). Its function is as follows. Catalyzes the methylthiolation of an aspartic acid residue of ribosomal protein uS12. The sequence is that of Ribosomal protein uS12 methylthiotransferase RimO from Caldanaerobacter subterraneus subsp. tengcongensis (strain DSM 15242 / JCM 11007 / NBRC 100824 / MB4) (Thermoanaerobacter tengcongensis).